A 129-amino-acid chain; its full sequence is Probable tautomerase YrdN (129 aa).

Proline 2 (proton acceptor; via imino nitrogen) is an active-site residue.

It belongs to the 4-oxalocrotonate tautomerase family.

Its function is as follows. Putative target of GltR. In Bacillus subtilis (strain 168), this protein is Probable tautomerase YrdN (yrdN).